Reading from the N-terminus, the 535-residue chain is CTP synthase (535 aa).

The tract at residues 1–267 is amidoligase domain; the sequence is MTKFIFVTGG…DDIVIKRLDL (267 aa). S13 is a binding site for CTP. Residue S13 coordinates UTP. 14-19 is a binding site for ATP; sequence SLGKGI. Y54 lines the L-glutamine pocket. Residue D71 participates in ATP binding. 2 residues coordinate Mg(2+): D71 and E141. CTP contacts are provided by residues 148 to 150, 188 to 193, and K224; these read DIE and KTKPTQ. UTP is bound by residues 188–193 and K224; that span reads KTKPTQ. 240–242 is an ATP binding site; the sequence is RDA. A Glutamine amidotransferase type-1 domain is found at 293-535; the sequence is TIGLVGKYVS…VEAAYKHQNK (243 aa). L-glutamine is bound at residue G355. Residue C382 is the Nucleophile; for glutamine hydrolysis of the active site. Residues 383–386, E406, and R463 contribute to the L-glutamine site; that span reads LGMQ. Catalysis depends on residues H508 and E510.

It belongs to the CTP synthase family. In terms of assembly, homotetramer.

It carries out the reaction UTP + L-glutamine + ATP + H2O = CTP + L-glutamate + ADP + phosphate + 2 H(+). It catalyses the reaction L-glutamine + H2O = L-glutamate + NH4(+). The enzyme catalyses UTP + NH4(+) + ATP = CTP + ADP + phosphate + 2 H(+). Its pathway is pyrimidine metabolism; CTP biosynthesis via de novo pathway; CTP from UDP: step 2/2. Its activity is regulated as follows. Allosterically activated by GTP, when glutamine is the substrate; GTP has no effect on the reaction when ammonia is the substrate. The allosteric effector GTP functions by stabilizing the protein conformation that binds the tetrahedral intermediate(s) formed during glutamine hydrolysis. Inhibited by the product CTP, via allosteric rather than competitive inhibition. Its function is as follows. Catalyzes the ATP-dependent amination of UTP to CTP with either L-glutamine or ammonia as the source of nitrogen. Regulates intracellular CTP levels through interactions with the four ribonucleotide triphosphates. This chain is CTP synthase, found in Staphylococcus haemolyticus (strain JCSC1435).